A 473-amino-acid chain; its full sequence is MNWEMVIGLEVHIQLSTKSKLFSTSATKYGQHQNTQAAFLDLGLPGTLPVVNKEAIRKAVIFGLAVDAKISKDSFFARKNYFYPDLPKGYQISQSTNPIVQEGRLDIETSKGLKTIRIERAHLEEDAGKSVHGYIAGETGLDYNRAGTPLLEIVTYPDFRSAEEVVAYLKKLHQLVKHLGICDGNMQEGSFRCDVNLSIRPQGQAKFGTRAELKNINSFRFIDKAIEYEYARQVSVLESGGEVVQETRLYDADANETRSMRAKEDAFDYRYFPDPDLLPLVITDEYIESIKKQMPLKPEEREAVYREHLAEQEVEFLLSNLEIADYYDKVAVVIGYKPAYNWVTVDLISTLNRAEKEFSSDVVPAEILLEIIANVQKDIISQANAKKVIAEYIDAPSAIEAIIEKLGLKQVSDEGMIRELVQGIIAANPQQAADFKAGKTKLMSFFVGQAMKASKGKANPKQVNQIVQEELNK.

This sequence belongs to the GatB/GatE family. GatB subfamily. In terms of assembly, heterotrimer of A, B and C subunits.

The catalysed reaction is L-glutamyl-tRNA(Gln) + L-glutamine + ATP + H2O = L-glutaminyl-tRNA(Gln) + L-glutamate + ADP + phosphate + H(+). The enzyme catalyses L-aspartyl-tRNA(Asn) + L-glutamine + ATP + H2O = L-asparaginyl-tRNA(Asn) + L-glutamate + ADP + phosphate + 2 H(+). Allows the formation of correctly charged Asn-tRNA(Asn) or Gln-tRNA(Gln) through the transamidation of misacylated Asp-tRNA(Asn) or Glu-tRNA(Gln) in organisms which lack either or both of asparaginyl-tRNA or glutaminyl-tRNA synthetases. The reaction takes place in the presence of glutamine and ATP through an activated phospho-Asp-tRNA(Asn) or phospho-Glu-tRNA(Gln). The sequence is that of Aspartyl/glutamyl-tRNA(Asn/Gln) amidotransferase subunit B from Francisella tularensis subsp. novicida (strain U112).